We begin with the raw amino-acid sequence, 189 residues long: Segregation and condensation protein B (189 aa).

It belongs to the ScpB family. In terms of assembly, homodimer. Homodimerization may be required to stabilize the binding of ScpA to the Smc head domains. Component of a cohesin-like complex composed of ScpA, ScpB and the Smc homodimer, in which ScpA and ScpB bind to the head domain of Smc. The presence of the three proteins is required for the association of the complex with DNA.

The protein localises to the cytoplasm. Functionally, participates in chromosomal partition during cell division. May act via the formation of a condensin-like complex containing Smc and ScpA that pull DNA away from mid-cell into both cell halves. The chain is Segregation and condensation protein B from Lachnoclostridium phytofermentans (strain ATCC 700394 / DSM 18823 / ISDg) (Clostridium phytofermentans).